The following is a 1228-amino-acid chain: Probable phospholipid-transporting ATPase 5 (1228 aa).

Residues M1 to F74 lie on the Cytoplasmic side of the membrane. The helical transmembrane segment at P75–L96 threads the bilayer. Topologically, residues S97–P100 are extracellular. Residues L101–K123 traverse the membrane as a helical segment. The Cytoplasmic portion of the chain corresponds to E124–I305. A helical transmembrane segment spans residues I306–E327. Residues T328–H359 lie on the Extracellular side of the membrane. Residues L360–V377 traverse the membrane as a helical segment. The Cytoplasmic portion of the chain corresponds to S378 to A934. The 4-aspartylphosphate intermediate role is filled by D425. Residue K616 forms a Glycyl lysine isopeptide (Lys-Gly) (interchain with G-Cter in ubiquitin) linkage. The Mg(2+) site is built by D879 and D883. A helical transmembrane segment spans residues Q935–F954. Residues E955–D968 lie on the Extracellular side of the membrane. The helical transmembrane segment at Y969–V988 threads the bilayer. The Cytoplasmic portion of the chain corresponds to F989–R1018. Residues I1019 to I1041 form a helical membrane-spanning segment. Residues Y1042 to D1054 are Extracellular-facing. The chain crosses the membrane as a helical span at residues M1055–T1077. Residues M1078–W1083 lie on the Cytoplasmic side of the membrane. A helical membrane pass occupies residues I1084–S1104. Topologically, residues M1105–I1117 are extracellular. A helical transmembrane segment spans residues L1118–H1146. The Cytoplasmic portion of the chain corresponds to I1147–L1228.

This sequence belongs to the cation transport ATPase (P-type) (TC 3.A.3) family. Type IV subfamily.

The protein localises to the membrane. The catalysed reaction is ATP + H2O + phospholipidSide 1 = ADP + phosphate + phospholipidSide 2.. Involved in transport of phospholipids. The chain is Probable phospholipid-transporting ATPase 5 from Arabidopsis thaliana (Mouse-ear cress).